A 925-amino-acid polypeptide reads, in one-letter code: Serine/threonine-protein phosphatase 1 regulatory subunit 10 (925 aa).

The tract at residues 1 to 348 is interaction with TOX4; the sequence is MGSGPIDPKE…EPAPPSEAMD (348 aa). The TFIIS N-terminal domain maps to 73–147; it reads KLLNNWLTYS…SDWMAVIRSQ (75 aa). The interval 147–211 is disordered; that stretch reads QSSTQPAEKD…APSHAKFRST (65 aa). 2 stretches are compositionally biased toward basic and acidic residues: residues 153-166 and 174-196; these read AEKD…EGKS and PLTE…EKPK. Glycyl lysine isopeptide (Lys-Gly) (interchain with G-Cter in SUMO2) cross-links involve residues Lys-179 and Lys-262. Disordered regions lie at residues 304 to 398, 536 to 555, and 587 to 890; these read KIKK…KRKT, TLEP…SKLP, and SIMG…HGGD. The residue at position 313 (Ser-313) is a Phosphoserine. Low complexity predominate over residues 325 to 336; that stretch reads KTSTEPSTAKPS. The interval 357–433 is necessary for interaction with PPP1CA; the sequence is PPVEVPELMD…NKIKDFGEAA (77 aa). A Phosphoserine modification is found at Ser-382. The tract at residues 393–408 is necessary for interaction with PPP1CC; that stretch reads GRKRKTVTWPEEGKLR. The PP1-binding motif motif lies at 394–423; sequence RKRKTVTWPEEGKLREYFYFELDETERVNV. At Thr-398 the chain carries Phosphothreonine; by PKA. Positions 418–619 are interaction with WDR82; sequence TERVNVNKIK…IKQMLVPHGL (202 aa). The segment covering 540–551 has biased composition (gly residues); the sequence is GGAGGSPDGAGG. Phosphoserine occurs at positions 545 and 591. The segment covering 596–611 has biased composition (basic and acidic residues); it reads PSEELLKQPDYSDKIK. The span at 644-655 shows a compositional bias: pro residues; it reads PPGPGGPMPGPH. The segment covering 656 to 665 has biased composition (gly residues); that stretch reads GGPGGPGGPV. The residue at position 668 (Arg-668) is an Omega-N-methylarginine. A compositionally biased stretch (low complexity) spans 679 to 693; sequence GDPFWDGPGDPMRGG. 2 positions are modified to omega-N-methylarginine: Arg-696 and Arg-741. Composition is skewed to gly residues over residues 728-766 and 775-829; these read ARGG…GMSS and GPGG…AGGG. 2 stretches are compositionally biased toward basic and acidic residues: residues 846–871 and 879–890; these read PHDV…HDGP and RGHDGGHNHGGD. The segment at 891–919 adopts a C3H1-type zinc-finger fold; it reads MSKRPVCRHFMMKGNCRYENNCAFYHPGV.

In terms of assembly, component of the PNUTS-PP1 complex (also named PTW/PP1 complex), composed of PPP1R10/PNUTS, TOX4, WDR82, and PPP1CA (or PPP1CB or PPP1CC). Phosphorylated on Ser-398 by PKA within the region necessary for interaction with PPP1CA.

Its subcellular location is the nucleus. It is found in the chromosome. Substrate-recognition component of the PNUTS-PP1 protein phosphatase complex, a protein phosphatase 1 (PP1) complex that promotes RNA polymerase II transcription pause-release, allowing transcription elongation. Promoter-proximal pausing by RNA polymerase II is a transcription halt following transcription initiation but prior to elongation, which acts as a checkpoint to control that transcripts are favorably configured for transcriptional elongation. The PNUTS-PP1 complex mediates the release of RNA polymerase II from promoter-proximal region of genes by catalyzing dephosphorylation of proteins involved in transcription, such as AFF4, CDK9, MEPCE, INTS12, NCBP1, POLR2M/GDOWN1 and SUPT6H. The PNUTS-PP1 complex also regulates RNA polymerase II transcription termination by mediating dephosphorylation of SUPT5H in termination zones downstream of poly(A) sites, thereby promoting deceleration of RNA polymerase II transcription. PNUTS-PP1 complex is also involved in the response to replication stress by mediating dephosphorylation of POLR2A at 'Ser-5' of the CTD, promoting RNA polymerase II degradation. The PNUTS-PP1 complex also plays a role in the control of chromatin structure and cell cycle progression during the transition from mitosis into interphase. PNUTS-PP1 complex mediates dephosphorylation of MYC, promoting MYC stability by preventing MYC ubiquitination by the SCF(FBXW7) complex. In addition to acts as a substrate-recognition component, PPP1R10/PNUTS also acts as a nuclear targeting subunit for the PNUTS-PP1 complex. In some context, PPP1R10/PNUTS also acts as an inhibitor of protein phosphatase 1 (PP1) activity by preventing access to substrates, such as RB. In Sus scrofa (Pig), this protein is Serine/threonine-protein phosphatase 1 regulatory subunit 10 (PPP1R10).